Here is a 374-residue protein sequence, read N- to C-terminus: Pectinesterase (374 aa).

Residues 1 to 31 (MVKLLNSTRELSINALSMLNSFGDMVAQATG) form the signal peptide. N58 and N124 each carry an N-linked (GlcNAc...) asparagine glycan. Substrate is bound by residues T133 and Q163. Catalysis depends on D186, which acts as the Proton donor. Cysteines 200 and 220 form a disulfide. D207 (nucleophile) is an active-site residue. A glycan (N-linked (GlcNAc...) asparagine) is linked at N230. Substrate-binding residues include R275 and W277. N303 is a glycosylation site (N-linked (GlcNAc...) asparagine).

This sequence belongs to the pectinesterase family. In terms of tissue distribution, pollen, and at much lower levels in pistils and petals.

It is found in the secreted. Its subcellular location is the cell wall. It catalyses the reaction [(1-&gt;4)-alpha-D-galacturonosyl methyl ester](n) + n H2O = [(1-&gt;4)-alpha-D-galacturonosyl](n) + n methanol + n H(+). The protein operates within glycan metabolism; pectin degradation; 2-dehydro-3-deoxy-D-gluconate from pectin: step 1/5. Its function is as follows. May play a role in pollen germination and/or tube growth. This is Pectinesterase (PPE1) from Petunia integrifolia (Violet-flowered petunia).